Here is a 219-residue protein sequence, read N- to C-terminus: Small ribosomal subunit protein uS3 (219 aa).

In terms of domain architecture, KH type-2 spans 38–106 (IRKYINTKLA…KVHINIVEIK (69 aa)).

It belongs to the universal ribosomal protein uS3 family. In terms of assembly, part of the 30S ribosomal subunit. Forms a tight complex with proteins S10 and S14.

Binds the lower part of the 30S subunit head. Binds mRNA in the 70S ribosome, positioning it for translation. The chain is Small ribosomal subunit protein uS3 from Latilactobacillus sakei subsp. sakei (strain 23K) (Lactobacillus sakei subsp. sakei).